Consider the following 108-residue polypeptide: Structural protein 1 (108 aa).

The interval 1–20 (MSRVSEYGVPEGVRESDSDT) is disordered. The Intravirion portion of the chain corresponds to 1 to 77 (MSRVSEYGVP…LKMQMDRLCN (77 aa)). The chain crosses the membrane as a helical; Signal-anchor for type II membrane protein span at residues 78–98 (VLGVVLQMATLALVTYIAFVV). The Virion surface portion of the chain corresponds to 99-108 (HTRATSCKRE).

The protein belongs to the varicellovirus ORF1 protein family. As to quaternary structure, homodimer. In terms of processing, phosphorylated.

The protein localises to the virion membrane. The protein resides in the host Golgi apparatus membrane. In Varicella-zoster virus (strain Dumas) (HHV-3), this protein is Structural protein 1.